The primary structure comprises 146 residues: Heat-stable 19 kDa antigen (146 aa).

The N-terminal stretch at 1–20 is a signal peptide; sequence MKFSLLSAIAAAVFVPFTSA.

This sequence belongs to the cerato-platanin family. In terms of processing, glycosylated.

It localises to the secreted. In Coccidioides posadasii (strain C735) (Valley fever fungus), this protein is Heat-stable 19 kDa antigen (CSA).